The sequence spans 304 residues: Phosphoribosylaminoimidazole-succinocarboxamide synthase (304 aa).

It belongs to the SAICAR synthetase family.

The enzyme catalyses 5-amino-1-(5-phospho-D-ribosyl)imidazole-4-carboxylate + L-aspartate + ATP = (2S)-2-[5-amino-1-(5-phospho-beta-D-ribosyl)imidazole-4-carboxamido]succinate + ADP + phosphate + 2 H(+). It functions in the pathway purine metabolism; IMP biosynthesis via de novo pathway; 5-amino-1-(5-phospho-D-ribosyl)imidazole-4-carboxamide from 5-amino-1-(5-phospho-D-ribosyl)imidazole-4-carboxylate: step 1/2. The sequence is that of Phosphoribosylaminoimidazole-succinocarboxamide synthase (ADE1) from Komagataella pastoris (Yeast).